Consider the following 188-residue polypeptide: Phosphoribosylglycinamide formyltransferase (188 aa).

Residue 12 to 14 coordinates N(1)-(5-phospho-beta-D-ribosyl)glycinamide; that stretch reads GSN. (6R)-10-formyltetrahydrofolate-binding positions include Lys66, 91 to 94, and Asn108; that span reads MRLI. His110 serves as the catalytic Proton donor.

Belongs to the GART family.

It carries out the reaction N(1)-(5-phospho-beta-D-ribosyl)glycinamide + (6R)-10-formyltetrahydrofolate = N(2)-formyl-N(1)-(5-phospho-beta-D-ribosyl)glycinamide + (6S)-5,6,7,8-tetrahydrofolate + H(+). It functions in the pathway purine metabolism; IMP biosynthesis via de novo pathway; N(2)-formyl-N(1)-(5-phospho-D-ribosyl)glycinamide from N(1)-(5-phospho-D-ribosyl)glycinamide (10-formyl THF route): step 1/1. In terms of biological role, catalyzes the transfer of a formyl group from 10-formyltetrahydrofolate to 5-phospho-ribosyl-glycinamide (GAR), producing 5-phospho-ribosyl-N-formylglycinamide (FGAR) and tetrahydrofolate. This chain is Phosphoribosylglycinamide formyltransferase, found in Staphylococcus aureus (strain MSSA476).